Reading from the N-terminus, the 437-residue chain is Adenosylhomocysteinase (437 aa).

Substrate-binding residues include Thr58, Asp133, and Glu158. 159–161 (TTT) is a binding site for NAD(+). Substrate is bound by residues Lys188 and Asp192. NAD(+) contacts are provided by residues Asn193, 224–229 (GDVGKG), Glu245, 301–303 (VGH), and Asn348.

It belongs to the adenosylhomocysteinase family. Homotetramer. NAD(+) serves as cofactor.

The catalysed reaction is S-adenosyl-L-homocysteine + H2O = L-homocysteine + adenosine. Its pathway is amino-acid biosynthesis; L-homocysteine biosynthesis; L-homocysteine from S-adenosyl-L-homocysteine: step 1/1. Functionally, adenosylhomocysteine is a competitive inhibitor of S-adenosyl-L-methionine-dependent methyl transferase reactions; therefore adenosylhomocysteinase may play a key role in the control of methylations via regulation of the intracellular concentration of adenosylhomocysteine. The chain is Adenosylhomocysteinase (ahcy-1) from Caenorhabditis elegans.